The chain runs to 389 residues: Probable family 17 glucosidase SCW10 (389 aa).

A signal peptide spans 1–18 (MRFSNFLTVSALLTGALG). Residues 19-29 (APAVRHKHEKR) constitute a propeptide that is removed on maturation. The interval 70 to 134 (ASQATTSTLE…SSASSSISAS (65 aa)) is disordered. Residue asparagine 279 is glycosylated (N-linked (GlcNAc...) asparagine). The active-site Nucleophile is the glutamate 326.

The protein belongs to the glycosyl hydrolase 17 family. In terms of processing, glycosylated.

It is found in the secreted. The protein localises to the cell wall. Functionally, glucanases possibly play a role in cell expansion during growth, in cell-cell fusion during mating, and in spore release during sporulation. The polypeptide is Probable family 17 glucosidase SCW10 (SCW10) (Saccharomyces cerevisiae (strain ATCC 204508 / S288c) (Baker's yeast)).